The sequence spans 218 residues: Cytochrome c biogenesis ATP-binding export protein CcmA (218 aa).

The ABC transporter domain occupies 2 to 217 (LEAKNLTCIR…KSCLSACCAV (216 aa)). ATP is bound at residue 34–41 (GPNGAGKT).

Belongs to the ABC transporter superfamily. CcmA exporter (TC 3.A.1.107) family. As to quaternary structure, the complex is composed of two ATP-binding proteins (CcmA) and two transmembrane proteins (CcmB).

It is found in the cell inner membrane. The catalysed reaction is heme b(in) + ATP + H2O = heme b(out) + ADP + phosphate + H(+). Functionally, part of the ABC transporter complex CcmAB involved in the biogenesis of c-type cytochromes; once thought to export heme, this seems not to be the case, but its exact role is uncertain. Responsible for energy coupling to the transport system. This Yersinia pseudotuberculosis serotype I (strain IP32953) protein is Cytochrome c biogenesis ATP-binding export protein CcmA.